A 447-amino-acid chain; its full sequence is Phosphoglucosamine mutase (447 aa).

Ser108 functions as the Phosphoserine intermediate in the catalytic mechanism. Mg(2+) contacts are provided by Ser108, Asp247, Asp249, and Asp251. At Ser108 the chain carries Phosphoserine.

It belongs to the phosphohexose mutase family. It depends on Mg(2+) as a cofactor. Post-translationally, activated by phosphorylation.

It catalyses the reaction alpha-D-glucosamine 1-phosphate = D-glucosamine 6-phosphate. Catalyzes the conversion of glucosamine-6-phosphate to glucosamine-1-phosphate. This is Phosphoglucosamine mutase from Bordetella petrii (strain ATCC BAA-461 / DSM 12804 / CCUG 43448).